The chain runs to 388 residues: Mitochondrial distribution and morphology protein 12 (388 aa).

In terms of domain architecture, SMP-LTD spans 1 to 388; it reads MSLDINWSLL…VFPNFHTVAL (388 aa). 2 disordered regions span residues 75–101 and 209–251; these read DDEGDFAEEEKQREKEREERDKLRNEA and PMSI…SSSS. Basic and acidic residues predominate over residues 83–101; that stretch reads EEKQREKEREERDKLRNEA. The span at 234–243 shows a compositional bias: pro residues; that stretch reads PSPPAHPAGL.

The protein belongs to the MDM12 family. Component of the ER-mitochondria encounter structure (ERMES) or MDM complex, composed of MMM1, MDM10, MDM12 and MDM34. An MMM1 homodimer associates with one molecule of MDM12 on each side in a pairwise head-to-tail manner, and the SMP-LTD domains of MMM1 and MDM12 generate a continuous hydrophobic tunnel for phospholipid trafficking.

The protein resides in the mitochondrion outer membrane. It is found in the endoplasmic reticulum membrane. Its function is as follows. Component of the ERMES/MDM complex, which serves as a molecular tether to connect the endoplasmic reticulum (ER) and mitochondria. Components of this complex are involved in the control of mitochondrial shape and protein biogenesis, and function in nonvesicular lipid trafficking between the ER and mitochondria. MDM12 is required for the interaction of the ER-resident membrane protein MMM1 and the outer mitochondrial membrane-resident beta-barrel protein MDM10. The MDM12-MMM1 subcomplex functions in the major beta-barrel assembly pathway that is responsible for biogenesis of all mitochondrial outer membrane beta-barrel proteins, and acts in a late step after the SAM complex. The MDM10-MDM12-MMM1 subcomplex further acts in the TOM40-specific pathway after the action of the MDM12-MMM1 complex. Essential for establishing and maintaining the structure of mitochondria and maintenance of mtDNA nucleoids. The protein is Mitochondrial distribution and morphology protein 12 of Cryptococcus neoformans var. neoformans serotype D (strain B-3501A) (Filobasidiella neoformans).